The following is a 512-amino-acid chain: 2,3-bisphosphoglycerate-independent phosphoglycerate mutase (512 aa).

Mn(2+)-binding residues include Asp-12 and Ser-62. The active-site Phosphoserine intermediate is Ser-62. Substrate-binding positions include His-123, 153-154 (RD), Arg-185, Arg-191, 260-263 (RPDR), and Lys-333. The Mn(2+) site is built by Asp-400, His-404, Asp-441, His-442, and His-460.

Belongs to the BPG-independent phosphoglycerate mutase family. Monomer. The cofactor is Mn(2+).

The enzyme catalyses (2R)-2-phosphoglycerate = (2R)-3-phosphoglycerate. Its pathway is carbohydrate degradation; glycolysis; pyruvate from D-glyceraldehyde 3-phosphate: step 3/5. Its function is as follows. Catalyzes the interconversion of 2-phosphoglycerate and 3-phosphoglycerate. This chain is 2,3-bisphosphoglycerate-independent phosphoglycerate mutase, found in Clostridium perfringens (strain 13 / Type A).